A 233-amino-acid polypeptide reads, in one-letter code: 2-C-methyl-D-erythritol 4-phosphate cytidylyltransferase (233 aa).

The protein belongs to the IspD/TarI cytidylyltransferase family. IspD subfamily.

It carries out the reaction 2-C-methyl-D-erythritol 4-phosphate + CTP + H(+) = 4-CDP-2-C-methyl-D-erythritol + diphosphate. Its pathway is isoprenoid biosynthesis; isopentenyl diphosphate biosynthesis via DXP pathway; isopentenyl diphosphate from 1-deoxy-D-xylulose 5-phosphate: step 2/6. Catalyzes the formation of 4-diphosphocytidyl-2-C-methyl-D-erythritol from CTP and 2-C-methyl-D-erythritol 4-phosphate (MEP). This Thiobacillus denitrificans (strain ATCC 25259 / T1) protein is 2-C-methyl-D-erythritol 4-phosphate cytidylyltransferase.